The following is a 153-amino-acid chain: MTDTELRVSKIQKGTVIDHIAGGQALNVLAILGIDGTSGDEISVGMNVPSDRLGRKDIVKVEGRELSQNEVDVLSLIAPAATINIVRDFEVIEKHRVTRPETVEGVLSCPNANCITTENEPVDSRFEVLEAGVRCSYCGTIIRESLAAHISVA.

Zn(2+)-binding residues include Cys109, Cys114, Cys135, and Cys138.

This sequence belongs to the PyrI family. As to quaternary structure, contains catalytic and regulatory chains. Requires Zn(2+) as cofactor.

Functionally, involved in allosteric regulation of aspartate carbamoyltransferase. This chain is Aspartate carbamoyltransferase regulatory chain, found in Natronomonas pharaonis (strain ATCC 35678 / DSM 2160 / CIP 103997 / JCM 8858 / NBRC 14720 / NCIMB 2260 / Gabara) (Halobacterium pharaonis).